The primary structure comprises 439 residues: MATTTSCSLLLSSTLFLHSPPSSHLSFFNLSSSRSSPISLYPIRSKRYFRILSKLSLNDNNRDDDDDTLHFTPFSAVKPFFLLCTSVALSFSLFAASPAVESASAFVVSTPKKLQTDELATVRLFQENTPSVVYITNLAVRQDAFTLDVLEVPQGSGSGFVWDKQGHIVTNYHVIRGASDLRVTLADQTTFDAKVVGFDQDKDVAVLRIDAPKNKLRPIPVGVSADLLVGQKVFAIGNPFGLDHTLTTGVISGLRREISSAATGRPIQDVIQTDAAINPGNSGGPLLDSSGTLIGINTAIYSPSGASSGVGFSIPVDTVGGIVDQLVRFGKVTRPILGIKFAPDQSVEQLGVSGVLVLDAPPSGPAGKAGLQSTKRDGYGRLVLGDIITSVNGTKVSNGSDLYRILDQCKVGDEVTVEVLRGDHKEKISVTLEPKPDES.

A serine protease region spans residues 154–323 (QGSGSGFVWD…IPVDTVGGIV (170 aa)). Residues H173, D203, and S282 each act as charge relay system in the active site. Residues 326-423 (LVRFGKVTRP…EVTVEVLRGD (98 aa)) form the PDZ domain.

The protein belongs to the peptidase S1C family. In terms of assembly, interacts with PTAC16 and other potential targets for degradation under high light conditions.

The protein resides in the plastid. It localises to the chloroplast thylakoid membrane. Its activity is regulated as follows. Inhibited by phenylmethylsulfonyl fluoride and O-phenanthroline. Its function is as follows. Serine protease that is required at high temperature. May be involved in the degradation of damaged proteins. In vivo, can degrade beta-casein. The sequence is that of Protease Do-like 1, chloroplastic (DEGP1) from Arabidopsis thaliana (Mouse-ear cress).